A 316-amino-acid chain; its full sequence is Tyrosine recombinase XerC (316 aa).

The Core-binding (CB) domain maps to 11-97 (SGLRKPLDQF…SLRSFFDFLI (87 aa)). The Tyr recombinase domain maps to 118–298 (PLPKNLDVDE…DFQHLADVYD (181 aa)). Active-site residues include Arg157, Lys181, His250, Arg253, and His276. Tyr285 (O-(3'-phospho-DNA)-tyrosine intermediate) is an active-site residue.

Belongs to the 'phage' integrase family. XerC subfamily. Forms a cyclic heterotetrameric complex composed of two molecules of XerC and two molecules of XerD.

The protein localises to the cytoplasm. Functionally, site-specific tyrosine recombinase, which acts by catalyzing the cutting and rejoining of the recombining DNA molecules. The XerC-XerD complex is essential to convert dimers of the bacterial chromosome into monomers to permit their segregation at cell division. It also contributes to the segregational stability of plasmids. This chain is Tyrosine recombinase XerC, found in Vibrio vulnificus (strain CMCP6).